The sequence spans 350 residues: Methionine import ATP-binding protein MetN 1 (350 aa).

One can recognise an ABC transporter domain in the interval 12–251; it reads IDLKNITVLF…PSREVTQDFV (240 aa). 48–55 provides a ligand contact to ATP; the sequence is GYSGAGKS.

The protein belongs to the ABC transporter superfamily. Methionine importer (TC 3.A.1.24) family. The complex is composed of two ATP-binding proteins (MetN), two transmembrane proteins (MetI) and a solute-binding protein (MetQ).

The protein resides in the cell membrane. The enzyme catalyses L-methionine(out) + ATP + H2O = L-methionine(in) + ADP + phosphate + H(+). It catalyses the reaction D-methionine(out) + ATP + H2O = D-methionine(in) + ADP + phosphate + H(+). Functionally, part of the ABC transporter complex MetNIQ involved in methionine import. Responsible for energy coupling to the transport system. The chain is Methionine import ATP-binding protein MetN 1 from Oenococcus oeni (strain ATCC BAA-331 / PSU-1).